The primary structure comprises 192 residues: Nucleosome assembly protein 1-like 5 (192 aa).

Positions 1–12 are enriched in polar residues; the sequence is MADSQNQGSAEP. Residues 1–76 are disordered; that stretch reads MADSQNQGSA…APKPRNDFIE (76 aa). 2 stretches are compositionally biased toward low complexity: residues 15–28 and 40–55; these read AAAAAAAADAAAAA and GDSDSASSDSDGVVGQ. Positions 86 to 112 form a coiled coil; that stretch reads VLALKKLQKRCDKIEAKFDKEFQALEK. Residues 136–192 are disordered; the sequence is AWTLEGDEEDDDDDEYEDEEEGEEEDEEEEEPAAEAAGTAAAKDEGPHSAVPDDAKK. A compositionally biased stretch (acidic residues) spans 140 to 168; it reads EGDEEDDDDDEYEDEEEGEEEDEEEEEPA. Basic and acidic residues predominate over residues 177-192; that stretch reads AKDEGPHSAVPDDAKK.

Belongs to the nucleosome assembly protein (NAP) family.

It localises to the nucleus. This Bos taurus (Bovine) protein is Nucleosome assembly protein 1-like 5 (NAP1L5).